The chain runs to 530 residues: Glucose-6-phosphate isomerase (530 aa).

The active-site Proton donor is Glu356. Residues His387 and Lys502 contribute to the active site.

The protein belongs to the GPI family.

Its subcellular location is the cytoplasm. The catalysed reaction is alpha-D-glucose 6-phosphate = beta-D-fructose 6-phosphate. Its pathway is carbohydrate biosynthesis; gluconeogenesis. The protein operates within carbohydrate degradation; glycolysis; D-glyceraldehyde 3-phosphate and glycerone phosphate from D-glucose: step 2/4. Its function is as follows. Catalyzes the reversible isomerization of glucose-6-phosphate to fructose-6-phosphate. The polypeptide is Glucose-6-phosphate isomerase (Borreliella afzelii (strain PKo) (Borrelia afzelii)).